A 475-amino-acid polypeptide reads, in one-letter code: Ankyrin repeat, SAM and basic leucine zipper domain-containing protein 1 (475 aa).

The segment at 1 to 22 (MAAGALRGLPVAGGGESSESED) is disordered. A phosphoserine mark is found at S17, S18, and S20. ANK repeat units follow at residues 45–74 (EKKE…SVDS), 78–107 (YGWT…NASF), 110–144 (DKQT…DPNV), 148–177 (RLMT…EVNT), 181–210 (NGYT…NKML), and 214–243 (DGKM…PLEG). Residues 272–334 (SYTAFGDLEV…KILATLKELQ (63 aa)) enclose the SAM domain.

As to quaternary structure, interacts with DDX4, PIWIL1, RANBP9 and TDRD1.

Its subcellular location is the cytoplasm. In terms of biological role, plays a central role during spermatogenesis by repressing transposable elements and preventing their mobilization, which is essential for the germline integrity. Acts via the piRNA metabolic process, which mediates the repression of transposable elements during meiosis by forming complexes composed of piRNAs and Piwi proteins and governs the methylation and subsequent repression of transposons. Its association with pi-bodies suggests a participation in the primary piRNAs metabolic process. Required prior to the pachytene stage to facilitate the production of multiple types of piRNAs, including those associated with repeats involved in the regulation of retrotransposons. May act by mediating protein-protein interactions during germ cell maturation. The protein is Ankyrin repeat, SAM and basic leucine zipper domain-containing protein 1 (ASZ1) of Colobus guereza (Mantled guereza).